The primary structure comprises 166 residues: Large ribosomal subunit protein uL10 (166 aa).

Belongs to the universal ribosomal protein uL10 family. In terms of assembly, part of the ribosomal stalk of the 50S ribosomal subunit. The N-terminus interacts with L11 and the large rRNA to form the base of the stalk. The C-terminus forms an elongated spine to which L12 dimers bind in a sequential fashion forming a multimeric L10(L12)X complex.

In terms of biological role, forms part of the ribosomal stalk, playing a central role in the interaction of the ribosome with GTP-bound translation factors. The sequence is that of Large ribosomal subunit protein uL10 from Pseudomonas paraeruginosa (strain DSM 24068 / PA7) (Pseudomonas aeruginosa (strain PA7)).